Reading from the N-terminus, the 153-residue chain is Coiled-coil domain-containing protein 182 (153 aa).

Residues 46–109 are a coiled coil; sequence ADLEILQQKV…RLREEEDRGI (64 aa).

In Homo sapiens (Human), this protein is Coiled-coil domain-containing protein 182 (CCDC182).